The following is a 483-amino-acid chain: Rhamnulokinase (483 aa).

Residue alanine 11–arginine 15 participates in ATP binding. Substrate-binding positions include glycine 79 and histidine 234 to threonine 236. The Proton acceptor role is filled by aspartate 235. An ATP-binding site is contributed by threonine 257. Position 294 (asparagine 294) interacts with substrate. Residue glutamine 302 participates in ATP binding. Cysteine 352 and cysteine 369 form a disulfide bridge. Residue glycine 401 coordinates ATP.

The protein belongs to the rhamnulokinase family. The cofactor is Mg(2+).

The enzyme catalyses L-rhamnulose + ATP = L-rhamnulose 1-phosphate + ADP + H(+). It participates in carbohydrate degradation; L-rhamnose degradation; glycerone phosphate from L-rhamnose: step 2/3. In terms of biological role, involved in the catabolism of L-rhamnose (6-deoxy-L-mannose). Catalyzes the transfer of the gamma-phosphate group from ATP to the 1-hydroxyl group of L-rhamnulose to yield L-rhamnulose 1-phosphate. This is Rhamnulokinase from Listeria innocua serovar 6a (strain ATCC BAA-680 / CLIP 11262).